The sequence spans 237 residues: MRPRLLVSPVNRDEALEAVEGGAHIIDVKNPEEGSLGANFPWVIREIMEVVPEDREVSATVGDVPYKPGTVAQAVLGVAAVGVDYAKVGLYGTKTEEEALEVMRACSRAVREFGYDTRVVAAGYADAHRVGSLDPMSVPEVAAEAECDVAMVDTAVKDGKRLFDFLSEEEVGEFVDSAHEHGLEVALAGSLRHEDMPIVRDLGADIVGVRGAACERGDRNRGAIRSHLVRKLAEALA.

The Schiff-base intermediate with substrate role is filled by Lys-29. The Proton acceptor role is filled by Lys-87.

The protein belongs to the MfnB family.

The catalysed reaction is 2 D-glyceraldehyde 3-phosphate = 4-(hydroxymethyl)-2-furancarboxaldehyde phosphate + phosphate + 2 H2O. It participates in cofactor biosynthesis; methanofuran biosynthesis. Catalyzes the formation of 4-(hydroxymethyl)-2-furancarboxaldehyde phosphate (4-HFC-P) from two molecules of glyceraldehyde-3-P (GA-3-P). The polypeptide is (5-formylfuran-3-yl)methyl phosphate synthase (Methanopyrus kandleri (strain AV19 / DSM 6324 / JCM 9639 / NBRC 100938)).